The primary structure comprises 458 residues: Bifunctional protein GlmU (458 aa).

Residues 1–230 (MENRYAIILA…FDEAMGVNDR (230 aa)) are pyrophosphorylase. Residues 9–12 (LAAG), Lys-23, Gln-73, and 78–79 (GT) contribute to the UDP-N-acetyl-alpha-D-glucosamine site. A Mg(2+)-binding site is contributed by Asp-103. UDP-N-acetyl-alpha-D-glucosamine contacts are provided by Gly-140, Glu-155, Asn-170, and Asn-228. Asn-228 serves as a coordination point for Mg(2+). The interval 231–251 (VALSTANKIMHRRLNEMHMRN) is linker. An N-acetyltransferase region spans residues 252-458 (GVTFIDPDTT…YAKKLPYMKD (207 aa)). The UDP-N-acetyl-alpha-D-glucosamine site is built by Arg-333 and Lys-351. The active-site Proton acceptor is His-363. Residues Tyr-366 and Asn-377 each contribute to the UDP-N-acetyl-alpha-D-glucosamine site. Residues 386–387 (NY), Ser-405, Ala-423, and Arg-440 contribute to the acetyl-CoA site.

This sequence in the N-terminal section; belongs to the N-acetylglucosamine-1-phosphate uridyltransferase family. The protein in the C-terminal section; belongs to the transferase hexapeptide repeat family. As to quaternary structure, homotrimer. Mg(2+) is required as a cofactor.

The protein localises to the cytoplasm. It carries out the reaction alpha-D-glucosamine 1-phosphate + acetyl-CoA = N-acetyl-alpha-D-glucosamine 1-phosphate + CoA + H(+). The catalysed reaction is N-acetyl-alpha-D-glucosamine 1-phosphate + UTP + H(+) = UDP-N-acetyl-alpha-D-glucosamine + diphosphate. Its pathway is nucleotide-sugar biosynthesis; UDP-N-acetyl-alpha-D-glucosamine biosynthesis; N-acetyl-alpha-D-glucosamine 1-phosphate from alpha-D-glucosamine 6-phosphate (route II): step 2/2. It functions in the pathway nucleotide-sugar biosynthesis; UDP-N-acetyl-alpha-D-glucosamine biosynthesis; UDP-N-acetyl-alpha-D-glucosamine from N-acetyl-alpha-D-glucosamine 1-phosphate: step 1/1. The protein operates within bacterial outer membrane biogenesis; LPS lipid A biosynthesis. Its function is as follows. Catalyzes the last two sequential reactions in the de novo biosynthetic pathway for UDP-N-acetylglucosamine (UDP-GlcNAc). The C-terminal domain catalyzes the transfer of acetyl group from acetyl coenzyme A to glucosamine-1-phosphate (GlcN-1-P) to produce N-acetylglucosamine-1-phosphate (GlcNAc-1-P), which is converted into UDP-GlcNAc by the transfer of uridine 5-monophosphate (from uridine 5-triphosphate), a reaction catalyzed by the N-terminal domain. This Enterococcus faecalis (strain ATCC 700802 / V583) protein is Bifunctional protein GlmU.